The following is a 452-amino-acid chain: MARLLLLFFFFLILLHYASCSRHEQEKDRIFHLPGEPNDVSFSHFSGYITVNESAGRALFYWLTESPPSENPESKPLVLWLNGGPGCSSVAYGAAEEIGPFRINPDGKTLYHNPYSWNKLANLLFLESPAGVGFSYSNTTSDLYTAGDQRTAEDAYVFLVKWFERFPQYKHREFYIAGESYAGHYVPQLSQIVYEKRNPAINFKGFIVGNAVIDDYHDYVGLFEYWWAHGLISDLTYHNLRITCEFGSSEHPSSKCTKAMEAADLEQGNIDPYSIYTVTCKKEAAALRSRFSRVRHPWMWRAYDPCTEKYSGMYFNSPEVQKAMHANITGLAYPWKGCSDIVGEKWADSPLSMLPIYKELIAAGLRIWVFSGDTDSVVPITGTRYSIRALKLQPLSKWYPWNDDGQVGGWSQVYKGLTLVTIHGAGHEVPLFRPRRAFLLFQSFLDNKPLPM.

Positions 1–20 are cleaved as a signal peptide; the sequence is MARLLLLFFFFLILLHYASC. Asn52 and Asn138 each carry an N-linked (GlcNAc...) asparagine glycan. Cystine bridges form between Cys87-Cys338, Cys244-Cys256, and Cys280-Cys306. Residue Ser180 is part of the active site. Residue Asn327 is glycosylated (N-linked (GlcNAc...) asparagine). Active-site residues include Asp375 and His427.

Belongs to the peptidase S10 family. Ubiquitous.

Its subcellular location is the secreted. Probable carboxypeptidase. The chain is Serine carboxypeptidase-like 26 (SCPL26) from Arabidopsis thaliana (Mouse-ear cress).